The following is a 239-amino-acid chain: MVRVTEVVHTKKHHKHKKIPKLISSRNLFKAVEKNNIAGTKFLLEHGISPNATHPNDSIEYKSLHWIISKNGELIEIEVGIDTPLHIAANNGYTTVVKILLENGAFINARDSFGFTPLHSAIISSYKLSSIKLLLEYGTSLTLEIIDGYYRGKTPVGLLKKIGSKKDKKVVALRALLELEKLYRNKELDKIVKKTYIKEPHIKDFIKWKIEAEIPKFIKSNISFLNKHIKKNYLLLISF.

ANK repeat units lie at residues Ile23–Ala52, Gly80–Ala109, and Phe113–Leu143.

This Rickettsia bellii (strain RML369-C) protein is Putative ankyrin repeat protein RBE_0489.